Here is a 265-residue protein sequence, read N- to C-terminus: Ribosomal RNA small subunit methyltransferase A (265 aa).

S-adenosyl-L-methionine is bound by residues H13, L15, G40, E61, D85, and N103.

It belongs to the class I-like SAM-binding methyltransferase superfamily. rRNA adenine N(6)-methyltransferase family. RsmA subfamily.

The protein resides in the cytoplasm. The enzyme catalyses adenosine(1518)/adenosine(1519) in 16S rRNA + 4 S-adenosyl-L-methionine = N(6)-dimethyladenosine(1518)/N(6)-dimethyladenosine(1519) in 16S rRNA + 4 S-adenosyl-L-homocysteine + 4 H(+). Functionally, specifically dimethylates two adjacent adenosines (A1518 and A1519) in the loop of a conserved hairpin near the 3'-end of 16S rRNA in the 30S particle. May play a critical role in biogenesis of 30S subunits. The protein is Ribosomal RNA small subunit methyltransferase A of Bordetella bronchiseptica (strain ATCC BAA-588 / NCTC 13252 / RB50) (Alcaligenes bronchisepticus).